Reading from the N-terminus, the 114-residue chain is Nucleoid-associated protein Amet_4780 (114 aa).

Residues 23–42 (QKMQKDMEKTQAALEEKEVE) form a disordered region. Positions 25 to 42 (MQKDMEKTQAALEEKEVE) are enriched in basic and acidic residues.

This sequence belongs to the YbaB/EbfC family. Homodimer.

It localises to the cytoplasm. Its subcellular location is the nucleoid. Binds to DNA and alters its conformation. May be involved in regulation of gene expression, nucleoid organization and DNA protection. This is Nucleoid-associated protein Amet_4780 from Alkaliphilus metalliredigens (strain QYMF).